A 491-amino-acid chain; its full sequence is Anthranilate synthase component 1 (491 aa).

L-tryptophan contacts are provided by residues Ser-49 and 271–273; that span reads PYL. Chorismate is bound at residue 306–307; that stretch reads GT. A Mg(2+)-binding site is contributed by Glu-333. Chorismate contacts are provided by residues Tyr-421, Arg-441, 455–457, and Gly-457; that span reads GAG. Glu-470 is a Mg(2+) binding site.

The protein belongs to the anthranilate synthase component I family. As to quaternary structure, heterotetramer consisting of two non-identical subunits: a beta subunit (TrpG) and a large alpha subunit (TrpE). It depends on Mg(2+) as a cofactor.

It carries out the reaction chorismate + L-glutamine = anthranilate + pyruvate + L-glutamate + H(+). The protein operates within amino-acid biosynthesis; L-tryptophan biosynthesis; L-tryptophan from chorismate: step 1/5. Feedback inhibited by tryptophan. Functionally, part of a heterotetrameric complex that catalyzes the two-step biosynthesis of anthranilate, an intermediate in the biosynthesis of L-tryptophan. In the first step, the glutamine-binding beta subunit (TrpG) of anthranilate synthase (AS) provides the glutamine amidotransferase activity which generates ammonia as a substrate that, along with chorismate, is used in the second step, catalyzed by the large alpha subunit of AS (TrpE) to produce anthranilate. In the absence of TrpG, TrpE can synthesize anthranilate directly from chorismate and high concentrations of ammonia. The protein is Anthranilate synthase component 1 (trpE) of Neisseria meningitidis serogroup A / serotype 4A (strain DSM 15465 / Z2491).